Here is a 339-residue protein sequence, read N- to C-terminus: Transcription initiation factor IIB (339 aa).

The TFIIB-type zinc finger occupies Glu39–Gln70. Residues Cys43, Cys46, Cys62, and Cys65 each contribute to the Zn(2+) site. Tandem repeats lie at residues Ser156 to Leu239 and Asp250 to Glu331.

This sequence belongs to the TFIIB family.

Functionally, stabilizes TBP binding to an archaeal box-A promoter. Also responsible for recruiting RNA polymerase II to the pre-initiation complex (DNA-TBP-TFIIB). The protein is Transcription initiation factor IIB of Methanococcus maripaludis (strain C6 / ATCC BAA-1332).